The chain runs to 332 residues: Phosphoenolpyruvate transferase (332 aa).

Aspartate 63 contacts 7,8-didemethyl-8-hydroxy-5-deazariboflavin.

It belongs to the CofD family. As to quaternary structure, homodimer. Requires Mg(2+) as cofactor.

The enzyme catalyses enolpyruvoyl-2-diphospho-5'-guanosine + 7,8-didemethyl-8-hydroxy-5-deazariboflavin = dehydro coenzyme F420-0 + GMP + H(+). It participates in cofactor biosynthesis; coenzyme F420 biosynthesis. Functionally, catalyzes the transfer of the phosphoenolpyruvate moiety from enoylpyruvoyl-2-diphospho-5'-guanosine (EPPG) to 7,8-didemethyl-8-hydroxy-5-deazariboflavin (FO) with the formation of dehydro coenzyme F420-0 and GMP. This chain is Phosphoenolpyruvate transferase, found in Nocardia farcinica (strain IFM 10152).